A 459-amino-acid polypeptide reads, in one-letter code: Glycosyl hydrolase family 109 protein (459 aa).

A signal peptide (tat-type signal) is located at residues 1–31 (MHNIHRRNFLKAAGAATAGLVTANIALNAYA). Residues 64 to 65 (ER), Asp86, 135 to 138 (WEWH), 155 to 156 (EV), and Asn184 contribute to the NAD(+) site. Substrate contacts are provided by residues Tyr213, Arg232, 244 to 247 (YPTH), and Tyr326. An NAD(+)-binding site is contributed by Tyr244.

Belongs to the Gfo/Idh/MocA family. Glycosyl hydrolase 109 subfamily. The cofactor is NAD(+). In terms of processing, predicted to be exported by the Tat system. The position of the signal peptide cleavage has not been experimentally proven.

Glycosidase. This is Glycosyl hydrolase family 109 protein from Shewanella baltica (strain OS155 / ATCC BAA-1091).